A 222-amino-acid polypeptide reads, in one-letter code: Leucyl/phenylalanyl-tRNA--protein transferase (222 aa).

It belongs to the L/F-transferase family.

Its subcellular location is the cytoplasm. The enzyme catalyses N-terminal L-lysyl-[protein] + L-leucyl-tRNA(Leu) = N-terminal L-leucyl-L-lysyl-[protein] + tRNA(Leu) + H(+). It catalyses the reaction N-terminal L-arginyl-[protein] + L-leucyl-tRNA(Leu) = N-terminal L-leucyl-L-arginyl-[protein] + tRNA(Leu) + H(+). The catalysed reaction is L-phenylalanyl-tRNA(Phe) + an N-terminal L-alpha-aminoacyl-[protein] = an N-terminal L-phenylalanyl-L-alpha-aminoacyl-[protein] + tRNA(Phe). In terms of biological role, functions in the N-end rule pathway of protein degradation where it conjugates Leu, Phe and, less efficiently, Met from aminoacyl-tRNAs to the N-termini of proteins containing an N-terminal arginine or lysine. The sequence is that of Leucyl/phenylalanyl-tRNA--protein transferase from Legionella pneumophila (strain Paris).